The following is a 189-amino-acid chain: Large ribosomal subunit protein bL9 (189 aa).

Belongs to the bacterial ribosomal protein bL9 family.

In terms of biological role, binds to the 23S rRNA. This is Large ribosomal subunit protein bL9 from Brucella anthropi (strain ATCC 49188 / DSM 6882 / CCUG 24695 / JCM 21032 / LMG 3331 / NBRC 15819 / NCTC 12168 / Alc 37) (Ochrobactrum anthropi).